Consider the following 200-residue polypeptide: Holliday junction branch migration complex subunit RuvA (200 aa).

The tract at residues 1–63 is domain I; the sequence is MYAYIKGTLT…EDAQLLYGFI (63 aa). Residues 64–142 are domain II; the sequence is NQEEKDMFLS…INDVDSSQIL (79 aa). The tract at residues 143–149 is flexible linker; that stretch reads NTDTQDH. Residues 150–200 are domain III; it reads ANAPIIKEALLALEALGYSKRELTKVEKSLSKETFDSVDDAVKRGLQLLIA.

Belongs to the RuvA family. As to quaternary structure, homotetramer. Forms an RuvA(8)-RuvB(12)-Holliday junction (HJ) complex. HJ DNA is sandwiched between 2 RuvA tetramers; dsDNA enters through RuvA and exits via RuvB. An RuvB hexamer assembles on each DNA strand where it exits the tetramer. Each RuvB hexamer is contacted by two RuvA subunits (via domain III) on 2 adjacent RuvB subunits; this complex drives branch migration. In the full resolvosome a probable DNA-RuvA(4)-RuvB(12)-RuvC(2) complex forms which resolves the HJ.

The protein resides in the cytoplasm. In terms of biological role, the RuvA-RuvB-RuvC complex processes Holliday junction (HJ) DNA during genetic recombination and DNA repair, while the RuvA-RuvB complex plays an important role in the rescue of blocked DNA replication forks via replication fork reversal (RFR). RuvA specifically binds to HJ cruciform DNA, conferring on it an open structure. The RuvB hexamer acts as an ATP-dependent pump, pulling dsDNA into and through the RuvAB complex. HJ branch migration allows RuvC to scan DNA until it finds its consensus sequence, where it cleaves and resolves the cruciform DNA. This chain is Holliday junction branch migration complex subunit RuvA, found in Staphylococcus saprophyticus subsp. saprophyticus (strain ATCC 15305 / DSM 20229 / NCIMB 8711 / NCTC 7292 / S-41).